The chain runs to 298 residues: ATP phosphoribosyltransferase (298 aa).

This sequence belongs to the ATP phosphoribosyltransferase family. Long subfamily. Mg(2+) serves as cofactor.

The protein resides in the cytoplasm. It catalyses the reaction 1-(5-phospho-beta-D-ribosyl)-ATP + diphosphate = 5-phospho-alpha-D-ribose 1-diphosphate + ATP. It participates in amino-acid biosynthesis; L-histidine biosynthesis; L-histidine from 5-phospho-alpha-D-ribose 1-diphosphate: step 1/9. With respect to regulation, feedback inhibited by histidine. In terms of biological role, catalyzes the condensation of ATP and 5-phosphoribose 1-diphosphate to form N'-(5'-phosphoribosyl)-ATP (PR-ATP). Has a crucial role in the pathway because the rate of histidine biosynthesis seems to be controlled primarily by regulation of HisG enzymatic activity. The sequence is that of ATP phosphoribosyltransferase from Aeromonas salmonicida (strain A449).